We begin with the raw amino-acid sequence, 472 residues long: Membrane-bound acylglycerophosphatidylinositol O-acyltransferase MBOAT7 (472 aa).

Residues 1–5 lie on the Cytoplasmic side of the membrane; it reads MSPEE. The chain crosses the membrane as a helical span at residues 6–22; it reads WTYLVVLLISIPIGFLF. Residues 23–33 lie on the Lumenal side of the membrane; sequence KKAGPGLKRWG. The chain crosses the membrane as a helical span at residues 34-57; that stretch reads AAAVGLGLTLFTCGPHTLHSLVTI. The Cytoplasmic segment spans residues 58 to 73; sequence LGTWALIQAQPCSCHA. The chain crosses the membrane as a helical span at residues 74–93; sequence LALAWTFSYLLFFRALSLLG. The Lumenal portion of the chain corresponds to 94-194; sequence LPTPTPFTNA…VPSLRPLLRR (101 aa). The chain crosses the membrane as a helical span at residues 195–212; the sequence is AWPAPLFGLLFLLSSHLF. Residues 213-231 lie on the Cytoplasmic side of the membrane; that stretch reads PLEAVREDAFYARPLPARL. A helical membrane pass occupies residues 232–261; it reads FYMIPVFFAFRMRFYVAWIAAECGCIAAGF. The Lumenal segment spans residues 262-426; sequence GAYPVAAKAR…LSLADTLRYW (165 aa). The N-linked (GlcNAc...) asparagine glycan is linked to Asn321. Residues 427–447 form a helical membrane-spanning segment; it reads ASIYFCIHFLALAALGLGLAL. Residues 448–472 lie on the Cytoplasmic side of the membrane; the sequence is GGGSPSRRKAASQPTSLAPEKLREE. Residues 453-472 are disordered; that stretch reads SRRKAASQPTSLAPEKLREE.

This sequence belongs to the membrane-bound acyltransferase family. Interacts with SPTSSA; the interaction facilitates MBOAT7 location to mitochondria-associated membranes (MAMs). Overexpressed in metastatic breast and bladder carcinomas relative to normal breast epithelium and urothelium.

It is found in the endoplasmic reticulum membrane. The enzyme catalyses a 1-acyl-sn-glycero-3-phospho-(1D-myo-inositol) + (5Z,8Z,11Z,14Z)-eicosatetraenoyl-CoA = a 1-acyl-2-(5Z,8Z,11Z,14Z-eicosatetraenoyl)-sn-glycero-3-phospho-(1D-myo-inositol) + CoA. It carries out the reaction (5Z,8Z,11Z,14Z)-eicosatetraenoyl-CoA + 1-hexadecanoyl-sn-glycero-3-phosphocholine = 1-hexadecanoyl-2-(5Z,8Z,11Z,14Z-eicosatetraenoyl)-sn-glycero-3-phosphocholine + CoA. It catalyses the reaction a 1-acyl-sn-glycero-3-phospho-(1D-myo-inositol) + an acyl-CoA = a 1,2-diacyl-sn-glycero-3-phospho-(1D-myo-inositol) + CoA. The catalysed reaction is 1-octadecanoyl-sn-glycero-3-phospho-(1D-myo-inositol) + (5Z,8Z,11Z,14Z)-eicosatetraenoyl-CoA = 1-octadecanoyl-2-(5Z,8Z,11Z,14Z-eicosatetraenoyl)-sn-glycero-3-phospho-(1D-myo-inositol) + CoA. Its pathway is lipid metabolism; phospholipid metabolism. Its activity is regulated as follows. Activity is inhibited by thimerosal. Acyltransferase which catalyzes the transfer of an acyl group from an acyl-CoA to a lysophosphatidylinositol (1-acylglycerophosphatidylinositol or LPI) leading to the production of a phosphatidylinositol (1,2-diacyl-sn-glycero-3-phosphoinositol or PI) and participates in the reacylation step of the phospholipid remodeling pathway also known as the Lands cycle. Prefers arachidonoyl-CoA as the acyl donor, thus contributing to the regulation of free levels arachidonic acid in cell. In liver, participates in the regulation of triglyceride metabolism through the phosphatidylinositol acyl-chain remodeling regulation. The protein is Membrane-bound acylglycerophosphatidylinositol O-acyltransferase MBOAT7 of Homo sapiens (Human).